The following is a 94-amino-acid chain: MPNTRQAKKRMRRDAKRRLRNRYHLSRMRTYIKNFRRMIENGEIDKAKEYINEVISVIYHTAAKGVIHKNEAARRASRVYKLLNKALQQQQAQA.

Belongs to the bacterial ribosomal protein bS20 family.

Its function is as follows. Binds directly to 16S ribosomal RNA. In Aquifex aeolicus (strain VF5), this protein is Small ribosomal subunit protein bS20.